A 256-amino-acid polypeptide reads, in one-letter code: MIILITNDDGFESEGIRLLKEIAQNFASEVWIVAPDADRSGAARSLDYPVKQFIKISQHSEREFSVSGTPADCVIIALNKIMNKKPDLILSGVNIGSNVGDDICYSGTIGAAMEGAARSIPSIALSQVYHDKIDWNNTKIFAPKVIAKLMKVGWPKDIVMSINFPATEKVKGVEFAEQGEYNIDGDLTFTENLNGSLSLNWSREHSGSGSVDKIKGGFITITPIKLDFTDYDILNAMKNSCAEEFSSIANTPIASD.

4 residues coordinate a divalent metal cation: Asp8, Asp9, Ser40, and Asn94.

Belongs to the SurE nucleotidase family. A divalent metal cation serves as cofactor.

It localises to the cytoplasm. It carries out the reaction a ribonucleoside 5'-phosphate + H2O = a ribonucleoside + phosphate. Its function is as follows. Nucleotidase that shows phosphatase activity on nucleoside 5'-monophosphates. The polypeptide is 5'-nucleotidase SurE (Wolbachia pipientis subsp. Culex pipiens (strain wPip)).